The following is a 71-amino-acid chain: Large ribosomal subunit protein uL29 (71 aa).

This sequence belongs to the universal ribosomal protein uL29 family.

The sequence is that of Large ribosomal subunit protein uL29 from Methanococcus maripaludis (strain C7 / ATCC BAA-1331).